Consider the following 263-residue polypeptide: Ribonuclease HII (263 aa).

In terms of domain architecture, RNase H type-2 spans 71-262 (QAIAGIDEVG…VKSMCCDSTN (192 aa)). Asp-77, Glu-78, and Asp-172 together coordinate a divalent metal cation.

It belongs to the RNase HII family. The cofactor is Mn(2+). Mg(2+) serves as cofactor.

The protein resides in the cytoplasm. The catalysed reaction is Endonucleolytic cleavage to 5'-phosphomonoester.. In terms of biological role, endonuclease that specifically degrades the RNA of RNA-DNA hybrids. In Streptococcus pyogenes serotype M5 (strain Manfredo), this protein is Ribonuclease HII.